We begin with the raw amino-acid sequence, 181 residues long: uncharacterized protein (181 aa).

It belongs to the M.jannaschii MJ0150/MJ0739/MJ0745/MJ1460/MJ1642 family.

This is an uncharacterized protein from Methanocaldococcus jannaschii (strain ATCC 43067 / DSM 2661 / JAL-1 / JCM 10045 / NBRC 100440) (Methanococcus jannaschii).